The chain runs to 303 residues: Protein REVEILLE 5 (303 aa).

The 55-residue stretch at 54–108 (TIKKSRENWTDQEHDKFLEALHLFDRDWKKIEAFVGSKTVVQIRSHAQKYFLKVQ) folds into the HTH myb-type domain. The H-T-H motif DNA-binding region spans 81–104 (WKKIEAFVGSKTVVQIRSHAQKYF). The tract at residues 109-130 (KSGANEHLPPPRPKRKASHPYP) is disordered.

It is found in the nucleus. Functionally, probable transcription factor. The polypeptide is Protein REVEILLE 5 (RVE5) (Arabidopsis thaliana (Mouse-ear cress)).